The primary structure comprises 934 residues: Isoleucine--tRNA ligase (934 aa).

Residues 58–68 (PYANGEIHIGH) carry the 'HIGH' region motif. L-isoleucyl-5'-AMP is bound at residue Glu-559. A 'KMSKS' region motif is present at residues 600–604 (KMSKS). Lys-603 lines the ATP pocket. Zn(2+) contacts are provided by Cys-897, Cys-900, Cys-917, and Cys-920.

The protein belongs to the class-I aminoacyl-tRNA synthetase family. IleS type 1 subfamily. As to quaternary structure, monomer. The cofactor is Zn(2+).

It localises to the cytoplasm. The catalysed reaction is tRNA(Ile) + L-isoleucine + ATP = L-isoleucyl-tRNA(Ile) + AMP + diphosphate. Catalyzes the attachment of isoleucine to tRNA(Ile). As IleRS can inadvertently accommodate and process structurally similar amino acids such as valine, to avoid such errors it has two additional distinct tRNA(Ile)-dependent editing activities. One activity is designated as 'pretransfer' editing and involves the hydrolysis of activated Val-AMP. The other activity is designated 'posttransfer' editing and involves deacylation of mischarged Val-tRNA(Ile). This chain is Isoleucine--tRNA ligase, found in Teredinibacter turnerae (strain ATCC 39867 / T7901).